The primary structure comprises 164 residues: Endoribonuclease YbeY (164 aa).

Zn(2+)-binding residues include His-130, His-134, and His-140.

This sequence belongs to the endoribonuclease YbeY family. Requires Zn(2+) as cofactor.

Its subcellular location is the cytoplasm. Its function is as follows. Single strand-specific metallo-endoribonuclease involved in late-stage 70S ribosome quality control and in maturation of the 3' terminus of the 16S rRNA. This chain is Endoribonuclease YbeY, found in Streptococcus mutans serotype c (strain ATCC 700610 / UA159).